Consider the following 526-residue polypeptide: Phosphoenolpyruvate carboxykinase (ATP) 2 (526 aa).

Substrate contacts are provided by arginine 55, tyrosine 190, and lysine 196. Residues lysine 196, histidine 215, and glycine 231–threonine 239 each bind ATP. 2 residues coordinate Mn(2+): lysine 196 and histidine 215. Residue aspartate 252 coordinates Mn(2+). ATP contacts are provided by glutamate 280, arginine 317, and threonine 442. Arginine 317 is a substrate binding site.

It belongs to the phosphoenolpyruvate carboxykinase (ATP) family. Mn(2+) is required as a cofactor.

It is found in the cytoplasm. The enzyme catalyses oxaloacetate + ATP = phosphoenolpyruvate + ADP + CO2. Its pathway is carbohydrate biosynthesis; gluconeogenesis. In terms of biological role, involved in the gluconeogenesis. Catalyzes the conversion of oxaloacetate (OAA) to phosphoenolpyruvate (PEP) through direct phosphoryl transfer between the nucleoside triphosphate and OAA. This is Phosphoenolpyruvate carboxykinase (ATP) 2 from Moorella thermoacetica (strain ATCC 39073 / JCM 9320).